The sequence spans 513 residues: Na(+)/H(+) antiporter NhaB (513 aa).

Transmembrane regions (helical) follow at residues 23-43 (LALI…PFVA), 52-72 (IFTL…LLAI), 97-117 (LLLM…LFIF), 120-140 (LLLS…AAAF), 144-164 (FLDA…FYGI), 202-222 (LMMH…VGEP), 238-258 (FFLR…LTCL), 303-323 (AIIG…VGLI), 348-368 (TESL…AVII), 391-411 (LFYI…VGTI), 447-467 (ATPN…APLI), and 475-495 (VWMA…CVEF).

Belongs to the NhaB Na(+)/H(+) (TC 2.A.34) antiporter family.

It localises to the cell inner membrane. The enzyme catalyses 2 Na(+)(in) + 3 H(+)(out) = 2 Na(+)(out) + 3 H(+)(in). Functionally, na(+)/H(+) antiporter that extrudes sodium in exchange for external protons. The polypeptide is Na(+)/H(+) antiporter NhaB (Escherichia coli O127:H6 (strain E2348/69 / EPEC)).